Consider the following 1142-residue polypeptide: E3 ubiquitin-protein ligase TRIM33 (1142 aa).

The segment covering M1–G18 has biased composition (gly residues). The tract at residues M1–G132 is disordered. The tract at residues M1 to H163 is necessary for E3 ubiquitin-protein ligase activity and repression of SMAD4 signaling and transcriptional repression. Residues S19–L42 show a composition bias toward low complexity. Residues R52–D64 are compositionally biased toward gly residues. Low complexity predominate over residues G65 to P99. Positions A100 to A122 are enriched in pro residues. An RING-type zinc finger spans residues C141–R201. 2 B box-type zinc fingers span residues K228–K275 and Q287–L328. Zn(2+)-binding residues include C233, C236, C257, H261, C292, H295, C315, and H320. The necessary for oligomerization stretch occupies residues C315–D417. Residues C315–D417 are a coiled coil. Glycyl lysine isopeptide (Lys-Gly) (interchain with G-Cter in SUMO2) cross-links involve residues K345, K350, K497, and K520. At R531 the chain carries Asymmetric dimethylarginine; alternate. At R531 the chain carries Omega-N-methylarginine; alternate. K543 participates in a covalent cross-link: Glycyl lysine isopeptide (Lys-Gly) (interchain with G-Cter in SUMO2). Omega-N-methylarginine is present on R551. At R593 the chain carries Asymmetric dimethylarginine. At R607 the chain carries Asymmetric dimethylarginine; alternate. Omega-N-methylarginine; alternate is present on R607. Residues R614 and R620 each carry the asymmetric dimethylarginine modification. Disordered stretches follow at residues P657–S676, N688–G707, and Y718–S834. The span at P738–R774 shows a compositional bias: low complexity. Basic and acidic residues-rich tracts occupy residues T775–P794 and K808–R817. An N6-acetyllysine; alternate mark is found at K778 and K784. Glycyl lysine isopeptide (Lys-Gly) (interchain with G-Cter in SUMO2); alternate cross-links involve residues K778 and K784. K789 participates in a covalent cross-link: Glycyl lysine isopeptide (Lys-Gly) (interchain with G-Cter in SUMO2). Residues K791 and K808 each participate in a glycyl lysine isopeptide (Lys-Gly) (interchain with G-Cter in SUMO2); alternate cross-link. Residues K791 and K808 each participate in a glycyl lysine isopeptide (Lys-Gly) (interchain with G-Cter in SUMO1); alternate cross-link. Position 808 is an N6-acetyllysine; alternate (K808). Residue K811 forms a Glycyl lysine isopeptide (Lys-Gly) (interchain with G-Cter in SUMO2) linkage. S818 carries the post-translational modification Phosphoserine. Residues L822–S834 show a composition bias toward low complexity. Residue T830 is modified to Phosphothreonine. A Glycyl lysine isopeptide (Lys-Gly) (interchain with G-Cter in SUMO2) cross-link involves residue K876. At S877 the chain carries Phosphoserine. The PHD-type zinc finger occupies E902–I949. The residue at position 966 (K966) is an N6-acetyllysine. K968 is modified (N6-acetyllysine; alternate). Residue K968 forms a Glycyl lysine isopeptide (Lys-Gly) (interchain with G-Cter in SUMO2); alternate linkage. In terms of domain architecture, Bromo spans G972–I1095. Glycyl lysine isopeptide (Lys-Gly) (interchain with G-Cter in SUMO2) cross-links involve residues K1022 and K1058. T1066 is modified (phosphothreonine). Residue K1072 forms a Glycyl lysine isopeptide (Lys-Gly) (interchain with G-Cter in SUMO2) linkage. The disordered stretch occupies residues P1103–K1142. Acidic residues predominate over residues F1107 to F1124. T1117 bears the Phosphothreonine mark. Position 1120 is a phosphoserine (S1120). K1133 participates in a covalent cross-link: Glycyl lysine isopeptide (Lys-Gly) (interchain with G-Cter in SUMO2). A compositionally biased stretch (basic and acidic residues) spans K1133 to K1142. At S1134 the chain carries Phosphoserine.

This sequence belongs to the TRIM/RBCC family. As to quaternary structure, homooligomer and heterooligomer with TRIM24 and TRIM28 family members. Interacts with SMAD4 in unstimulated cells. Found in a complex with SMAD2 and SMAD3 upon addition of TGF-beta. Interacts with SMAD2 and SMAD3. Interacts with SMAD4 under basal and induced conditions and, upon TGF-beta signaling, with activated SMAD2. Forms a ternary complex with SMAD4 and SMAD2 upon TGF-beta signaling. In terms of processing, sumoylated with SUMO1. As to expression, ubiquitous with high level in testis.

The protein resides in the nucleus. The enzyme catalyses S-ubiquitinyl-[E2 ubiquitin-conjugating enzyme]-L-cysteine + [acceptor protein]-L-lysine = [E2 ubiquitin-conjugating enzyme]-L-cysteine + N(6)-ubiquitinyl-[acceptor protein]-L-lysine.. It functions in the pathway protein modification; protein ubiquitination. Its function is as follows. Acts as an E3 ubiquitin-protein ligase. Promotes SMAD4 ubiquitination, nuclear exclusion and degradation via the ubiquitin proteasome pathway. May act as a transcriptional repressor. Inhibits the transcriptional response to TGF-beta/BMP signaling cascade. Plays a role in the control of cell proliferation. Its association with SMAD2 and SMAD3 stimulates erythroid differentiation of hematopoietic stem/progenitor. Monoubiquitinates SMAD4 and acts as an inhibitor of SMAD4-dependent TGF-beta/BMP signaling cascade (Monoubiquitination of SMAD4 hampers its ability to form a stable complex with activated SMAD2/3 resulting in inhibition of TGF-beta/BMP signaling cascade). This Mus musculus (Mouse) protein is E3 ubiquitin-protein ligase TRIM33 (Trim33).